The following is a 234-amino-acid chain: Peptidase E (234 aa).

Active-site charge relay system residues include S120, D135, and H157.

This sequence belongs to the peptidase S51 family.

Its subcellular location is the cytoplasm. The catalysed reaction is Dipeptidase E catalyzes the hydrolysis of dipeptides Asp-|-Xaa. It does not act on peptides with N-terminal Glu, Asn or Gln, nor does it cleave isoaspartyl peptides.. Hydrolyzes dipeptides containing N-terminal aspartate residues. May play a role in allowing the cell to use peptide aspartate to spare carbon otherwise required for the synthesis of the aspartate family of amino acids. This chain is Peptidase E, found in Salmonella gallinarum (strain 287/91 / NCTC 13346).